Consider the following 175-residue polypeptide: Myosin regulatory light chain 2, atrial isoform (175 aa).

Residue Ala-2 is modified to N-acetylalanine. Phosphoserine occurs at positions 22 and 23. 3 consecutive EF-hand domains span residues 32-67 (AQIQEFKEAFSCIDQNRDGIICKSDLRETYSQLGKV), 102-137 (DPEEAILSAFRLFDPSGKGVVNKDQFKQLLLTQADK), and 138-173 (FSPAEVEQMFALTPMDLAGNIDYKSLCYIITHGDEK). Asp-45, Asn-47, Asp-49, and Asp-56 together coordinate Ca(2+).

Myosin is a hexamer of 2 heavy chains and 4 light chains.

The polypeptide is Myosin regulatory light chain 2, atrial isoform (MYL7) (Sus scrofa (Pig)).